The following is a 312-amino-acid chain: Cytochrome f (312 aa).

The signal sequence occupies residues methionine 1–alanine 30. Residues tyrosine 31, cysteine 51, cysteine 54, and histidine 55 each contribute to the heme site. A helical membrane pass occupies residues valine 278 to lysine 298.

It belongs to the cytochrome f family. The 4 large subunits of the cytochrome b6-f complex are cytochrome b6, subunit IV (17 kDa polypeptide, petD), cytochrome f and the Rieske protein, while the 4 small subunits are PetG, PetL, PetM and PetN. The complex functions as a dimer. The cofactor is heme.

The protein resides in the plastid. It is found in the chloroplast thylakoid membrane. Component of the cytochrome b6-f complex, which mediates electron transfer between photosystem II (PSII) and photosystem I (PSI), cyclic electron flow around PSI, and state transitions. The chain is Cytochrome f (petA) from Bigelowiella natans (Pedinomonas minutissima).